The primary structure comprises 469 residues: MAPLCLRDCKAWQDAGLTLSTTSNEVCKLFDATLTQYATWKNDCTLGGIDGCLSRIKDTDPNFVMGHVAANGLELIGTGRSPRVDKELANAVRVMSDLSKSQALTEREMLHVAAVETFANGNLPKAADLWERILQNHPTDLLALKFAHDCYFYLGEQRQMRDSVARVLPYWKPGTPLSSYVKGMYSFGLLETNFYDQALKVAKEALAVDQTDSWSVHTVAHVHEMRADLDSGLAFMQETENNWKGSDMLACHVYWHWALYFIEKGDYEAALTLYDNHIAPQCFASGTMLDVVDNSSMLYRLQLEGVNVGDRWKNLLQITKSHTQDHMLIFNDLHFLMSSLGSKDEDMTRELVESMQELSKSPGENQQHGLINHLGTPLCRALIEYDRGHYDKAADLMYPIRYQILGIGGSDAQRDLFNQVLIRAAINSSSKYHQNLARCLLTERDMGRPNSPLTQRLIKKCSAGPGILG.

TPR repeat units follow at residues 107-140, 179-212, and 251-284; these read REMLHVAAVETFANGNLPKAADLWERILQNHPTD, SYVKGMYSFGLLETNFYDQALKVAKEALAVDQTD, and CHVYWHWALYFIEKGDYEAALTLYDNHIAPQCFA.

It belongs to the TTC38 family.

The polypeptide is Tetratricopeptide repeat protein 38 (ttc38) (Xenopus tropicalis (Western clawed frog)).